Reading from the N-terminus, the 187-residue chain is MQDKNNLCWLDMEMTGLNPETDRIIEVAMIITDSDLNVLAQSEVYAIHQSDELLDNMDEWNTATHGRTGLTQRVRESSHTEAEVEQKLLDFMSEWVPRRATPMCGNSIHQDRRFMVKYMPKLENYFHYRNLDVSTLKELAKRWNPPVAKSVVKRGSHKALDDILESIEEMRHYREHFLISAPRAEAQ.

The Exonuclease domain occupies 7–170; the sequence is LCWLDMEMTG…DDILESIEEM (164 aa). Tyrosine 128 is an active-site residue.

The protein belongs to the oligoribonuclease family.

Its subcellular location is the cytoplasm. In terms of biological role, 3'-to-5' exoribonuclease specific for small oligoribonucleotides. The polypeptide is Oligoribonuclease (Neisseria meningitidis serogroup A / serotype 4A (strain DSM 15465 / Z2491)).